The primary structure comprises 178 residues: ATP-dependent protease subunit HslV (178 aa).

T5 is an active-site residue. Na(+) contacts are provided by A160, C163, and T166.

This sequence belongs to the peptidase T1B family. HslV subfamily. As to quaternary structure, a double ring-shaped homohexamer of HslV is capped on each side by a ring-shaped HslU homohexamer. The assembly of the HslU/HslV complex is dependent on binding of ATP.

It is found in the cytoplasm. It catalyses the reaction ATP-dependent cleavage of peptide bonds with broad specificity.. Allosterically activated by HslU binding. In terms of biological role, protease subunit of a proteasome-like degradation complex believed to be a general protein degrading machinery. In Magnetococcus marinus (strain ATCC BAA-1437 / JCM 17883 / MC-1), this protein is ATP-dependent protease subunit HslV.